A 417-amino-acid chain; its full sequence is Solanesyl diphosphate synthase 2, chloroplastic (417 aa).

Residues 1–60 (MMMSCRNIDLGTSVLDHSCSSSSTSRRFLFGNSSKTVCMIGGRSCVGNLVFLRRDLATCR) constitute a chloroplast transit peptide. Residues Lys137, Arg140, and His175 each coordinate isopentenyl diphosphate. Mg(2+)-binding residues include Asp182 and Asp186. Residue Arg191 participates in an all-trans-polyprenyl diphosphate binding. Position 192 (Arg192) interacts with isopentenyl diphosphate. Residues Lys268, Thr269, Gln306, and Lys323 each contribute to the an all-trans-polyprenyl diphosphate site.

The protein belongs to the FPP/GGPP synthase family. In terms of assembly, homodimer. Interacts with FBN5. Mg(2+) serves as cofactor. In terms of tissue distribution, higher expression in leaves than in roots.

It localises to the plastid. It is found in the chloroplast. It catalyses the reaction 5 isopentenyl diphosphate + (2E,6E,10E)-geranylgeranyl diphosphate = all-trans-nonaprenyl diphosphate + 5 diphosphate. Functionally, involved in providing solanesyl diphosphate for plastoquinone-9 (PQ-9) formation in plastids. Catalyzes the elongation of the prenyl side chain of PQ-9 in plastids. Contributes to the biosynthesis of plastochromanol-8 (PC-8) in plastids. Does not contribute to the synthesis of tocopherol or ubiquinone. PQ-9 and PC-8 are lipophilic antioxidants that act as protectant against photooxidative stress under high light stress conditions. Prefers geranylgeranyl diphosphate to farnesyl diphosphate as substrate. No activity with geranyl diphosphate or dimethylallyl diphosphate as substrate. In Arabidopsis thaliana (Mouse-ear cress), this protein is Solanesyl diphosphate synthase 2, chloroplastic.